Consider the following 196-residue polypeptide: Molybdenum cofactor guanylyltransferase (196 aa).

GTP-binding positions include 10–12 (LAG), lysine 23, asparagine 51, aspartate 69, and aspartate 99. Aspartate 99 lines the Mg(2+) pocket.

The protein belongs to the MobA family. In terms of assembly, monomer. The cofactor is Mg(2+).

The protein localises to the cytoplasm. The catalysed reaction is Mo-molybdopterin + GTP + H(+) = Mo-molybdopterin guanine dinucleotide + diphosphate. Its function is as follows. Transfers a GMP moiety from GTP to Mo-molybdopterin (Mo-MPT) cofactor (Moco or molybdenum cofactor) to form Mo-molybdopterin guanine dinucleotide (Mo-MGD) cofactor. The protein is Molybdenum cofactor guanylyltransferase of Shewanella frigidimarina (strain NCIMB 400).